The chain runs to 471 residues: ATP synthase subunit beta (471 aa).

158–165 (GGAGCGKT) serves as a coordination point for ATP.

Belongs to the ATPase alpha/beta chains family. In terms of assembly, F-type ATPases have 2 components, CF(1) - the catalytic core - and CF(0) - the membrane proton channel. CF(1) has five subunits: alpha(3), beta(3), gamma(1), delta(1), epsilon(1). CF(0) has three main subunits: a(1), b(2) and c(9-12). The alpha and beta chains form an alternating ring which encloses part of the gamma chain. CF(1) is attached to CF(0) by a central stalk formed by the gamma and epsilon chains, while a peripheral stalk is formed by the delta and b chains.

Its subcellular location is the cell inner membrane. The catalysed reaction is ATP + H2O + 4 H(+)(in) = ADP + phosphate + 5 H(+)(out). Functionally, produces ATP from ADP in the presence of a proton gradient across the membrane. The catalytic sites are hosted primarily by the beta subunits. The chain is ATP synthase subunit beta from Desulfotalea psychrophila (strain LSv54 / DSM 12343).